Consider the following 468-residue polypeptide: Cysteine--tRNA ligase (468 aa).

Residue Cys-33 coordinates Zn(2+). The 'HIGH' region motif lies at 35–45 (ATVQGLPHIGH). Zn(2+)-binding residues include Cys-211, His-236, and Glu-240. Residues 267–271 (KMSKS) carry the 'KMSKS' region motif. Lys-270 contributes to the ATP binding site.

Belongs to the class-I aminoacyl-tRNA synthetase family. As to quaternary structure, monomer. The cofactor is Zn(2+).

It is found in the cytoplasm. The enzyme catalyses tRNA(Cys) + L-cysteine + ATP = L-cysteinyl-tRNA(Cys) + AMP + diphosphate. This Mycobacterium avium (strain 104) protein is Cysteine--tRNA ligase.